Consider the following 1114-residue polypeptide: Constitutive coactivator of PPAR-gamma-like protein 1 (1114 aa).

Residues P339–L402 are interaction with YES1, SRC and FYN. Disordered stretches follow at residues Q372–A396 and E411–I519. Positions S431–H443 are enriched in polar residues. The span at G477–K498 shows a compositional bias: basic and acidic residues. Residues A499–Q510 are compositionally biased toward polar residues. T651 is subject to Phosphothreonine. Positions A825–E1114 are RNA binding. R869, R880, and R882 each carry omega-N-methylarginine. The segment at F918 to G940 is disordered. The residue at position 928 (K928) is an N6-acetyllysine. Low complexity predominate over residues S929–G940. S956 carries the post-translational modification Phosphoserine. Omega-N-methylarginine occurs at positions 978 and 982. The disordered stretch occupies residues A1009 to C1099. S1019 is subject to Phosphoserine. Over residues E1022 to E1033 the composition is skewed to basic and acidic residues. The segment covering S1034–G1043 has biased composition (polar residues). A phosphoserine mark is found at S1040, S1041, and S1044. Residues M1060 to S1097 show a composition bias toward polar residues.

It belongs to the constitutive coactivator of PPAR-gamma family. As to quaternary structure, interacts with PURA. Interacts with YES1, SRC, FYN. Upon tyrosine phosphorylation, interacts with PIK3R1. Arg-978 is dimethylated, probably to asymmetric dimethylarginine. Post-translationally, phosphorylated on tyrosine by src family kinases upon ultraviolet exposure.

Its subcellular location is the cytoplasm. It localises to the cell membrane. Component of the oxidative stress-induced survival signaling. May regulate the activation of SRC family protein kinases. May act as a scaffolding protein enabling SRC family protein kinases to phosphorylate and activate PI3-kinase. Binds IGF2 RNA and promotes the production of IGF2 protein. This chain is Constitutive coactivator of PPAR-gamma-like protein 1 (FAM120A), found in Bos taurus (Bovine).